The sequence spans 658 residues: MDKFEISSKFKPSDDQEKAVTNIVDSIRSGNKFNVLLGVTGSGKTFTMANVIKRLNMPTLIMTHNKSLAAQLYSEFKGFFPKNHVEYFISYYDYYQPEAYIPRQDLFIEKDSSINEELERLRLSATANLLEFDDVVVVASVSANYGLGNPAEYKGMVLLLSLGMSLNQKELLLKLVDMGYKRNDAYFDRGDFRVNGDVVDIYPAYFNDEAIRLEFFGDELDAMYHFDVLENKRTKDVSKFILYATSQFIVGENRLKQAIKDIELELEDRLAFYEKENRLVEYQRLKQRVEFDLEMLSSTGSTKGVENYARYLTGQKAGETPYSLFDYFEVSGKDYLVIVDESHVSLPQFRGMYAGDRSRKEVLVEYGFRLPSALDNRPLKLDEFIAKKANYLFVSATPNQYEIDLSQGHVYEQILRPTGLLDPRIEVISSDNQVEVLFDRAKAVIARGERVLVTTLTKKMSEELTRYYQELGIKVKYMHSDIDAVERNELIRGLRKGEFDMLVGINLLREGLDLPEVSLVAVLDADKEGFLRSRTSLIQTMGRAARNVNGTVILFANKITNSMKEAIDTTEARRKYQGDYNKKYGITPRSASRNLEDSLKEEDLPNLYNKAKKLEKMPASERAKIVKELRKQMLEAAKNLEFEKAAALRDEIAKLREL.

Residues aspartate 25–arginine 182 enclose the Helicase ATP-binding domain. Position 38–45 (glycine 38–threonine 45) interacts with ATP. A Beta-hairpin motif is present at residues tyrosine 91–isoleucine 114. Positions glutamine 433–glutamate 596 constitute a Helicase C-terminal domain. The region spanning alanine 623 to leucine 658 is the UVR domain.

Belongs to the UvrB family. In terms of assembly, forms a heterotetramer with UvrA during the search for lesions. Interacts with UvrC in an incision complex.

Its subcellular location is the cytoplasm. Functionally, the UvrABC repair system catalyzes the recognition and processing of DNA lesions. A damage recognition complex composed of 2 UvrA and 2 UvrB subunits scans DNA for abnormalities. Upon binding of the UvrA(2)B(2) complex to a putative damaged site, the DNA wraps around one UvrB monomer. DNA wrap is dependent on ATP binding by UvrB and probably causes local melting of the DNA helix, facilitating insertion of UvrB beta-hairpin between the DNA strands. Then UvrB probes one DNA strand for the presence of a lesion. If a lesion is found the UvrA subunits dissociate and the UvrB-DNA preincision complex is formed. This complex is subsequently bound by UvrC and the second UvrB is released. If no lesion is found, the DNA wraps around the other UvrB subunit that will check the other stand for damage. In Campylobacter fetus subsp. fetus (strain 82-40), this protein is UvrABC system protein B.